Consider the following 600-residue polypeptide: Xylulose kinase (600 aa).

Residue 79-82 (WLEA) coordinates substrate. Serine 244 carries the post-translational modification Phosphoserine. Aspartate 299 is a binding site for substrate. ATP-binding positions include glycine 358 and 505–509 (GASKN).

This sequence belongs to the FGGY kinase family.

Its subcellular location is the cytoplasm. It catalyses the reaction D-xylulose + ATP = D-xylulose 5-phosphate + ADP + H(+). In terms of biological role, xylulose kinase necessary for growth in culture media with D-xylulose as the solecarbon source. The polypeptide is Xylulose kinase (Saccharomyces cerevisiae (strain ATCC 204508 / S288c) (Baker's yeast)).